An 899-amino-acid polypeptide reads, in one-letter code: Protein translocase subunit SecA (899 aa).

ATP is bound by residues Q87, 105–109 (GEGKT), and D516. Positions 884, 886, 895, and 896 each coordinate Zn(2+).

Belongs to the SecA family. Monomer and homodimer. Part of the essential Sec protein translocation apparatus which comprises SecA, SecYEG and auxiliary proteins SecDF. Other proteins may also be involved. Zn(2+) serves as cofactor.

Its subcellular location is the cell inner membrane. The protein resides in the cytoplasm. It carries out the reaction ATP + H2O + cellular proteinSide 1 = ADP + phosphate + cellular proteinSide 2.. Functionally, part of the Sec protein translocase complex. Interacts with the SecYEG preprotein conducting channel. Has a central role in coupling the hydrolysis of ATP to the transfer of proteins into and across the cell membrane, serving as an ATP-driven molecular motor driving the stepwise translocation of polypeptide chains across the membrane. The sequence is that of Protein translocase subunit SecA from Borrelia garinii subsp. bavariensis (strain ATCC BAA-2496 / DSM 23469 / PBi) (Borreliella bavariensis).